Reading from the N-terminus, the 519-residue chain is MNRDMPSGRELKSFLEQTFSTLDAVLSGQNARLQEKEVGTVSFVGQGIVRASGLPHVRSEELVVFPGNLLGLVFNVDLDEIGIITLDHTEDISAGSAVRRTGRVLDVPVGEALLGRVLDPMGRPLDNRGEVAAARRLPLEREAPAVMDRAPVSVPLQTGIKVIDSLIAIGRGQRELILGDRQTGKTAIILDTIINQHDKNVICIYCAIGKQSADTARVVSVLESFRTLPYCIIVVAAGEDPPGLQYIAPYAATSMGEYFMKRGKDVLVIYDDLTRHARAYRELSLLLRRPPGREAYPGDIFYIHARMLERATHLREELGGGSLTAIPIIETEAQDISAYIPTNLISITDGQIYLSSRLFQKGILPAIDVGKSVSRVGGKTQLPAYRTVAGDLRLSYSQFEELETFSRFGTRLDEETRRKLERGRRVREILKQKQYNPLCVADQIAALLSVTSGALDGISLENIGAAEKRIQEAVHVQLSDLCDRIKKGEPLTVHDRKTLLDAARSAVAAEPERHRNADS.

179–186 serves as a coordination point for ATP; the sequence is GDRQTGKT.

It belongs to the ATPase alpha/beta chains family. In terms of assembly, F-type ATPases have 2 components, CF(1) - the catalytic core - and CF(0) - the membrane proton channel. CF(1) has five subunits: alpha(3), beta(3), gamma(1), delta(1), epsilon(1). CF(0) has three main subunits: a(1), b(2) and c(9-12). The alpha and beta chains form an alternating ring which encloses part of the gamma chain. CF(1) is attached to CF(0) by a central stalk formed by the gamma and epsilon chains, while a peripheral stalk is formed by the delta and b chains.

The protein resides in the cell inner membrane. The enzyme catalyses ATP + H2O + 4 H(+)(in) = ADP + phosphate + 5 H(+)(out). Functionally, produces ATP from ADP in the presence of a proton gradient across the membrane. The alpha chain is a regulatory subunit. The polypeptide is ATP synthase subunit alpha 2 (Syntrophus aciditrophicus (strain SB)).